Consider the following 428-residue polypeptide: Enolase (428 aa).

(2R)-2-phosphoglycerate is bound at residue glutamine 163. Glutamate 205 functions as the Proton donor in the catalytic mechanism. Residues aspartate 242, glutamate 286, and aspartate 313 each coordinate Mg(2+). (2R)-2-phosphoglycerate-binding residues include lysine 338, arginine 367, serine 368, and lysine 389. Lysine 338 acts as the Proton acceptor in catalysis.

It belongs to the enolase family. Mg(2+) is required as a cofactor.

The protein resides in the cytoplasm. It is found in the secreted. The protein localises to the cell surface. The catalysed reaction is (2R)-2-phosphoglycerate = phosphoenolpyruvate + H2O. Its pathway is carbohydrate degradation; glycolysis; pyruvate from D-glyceraldehyde 3-phosphate: step 4/5. Catalyzes the reversible conversion of 2-phosphoglycerate (2-PG) into phosphoenolpyruvate (PEP). It is essential for the degradation of carbohydrates via glycolysis. The chain is Enolase from Lactobacillus helveticus (strain DPC 4571).